Here is a 302-residue protein sequence, read N- to C-terminus: Methionyl-tRNA formyltransferase (302 aa).

Position 107 to 110 (107 to 110) interacts with (6S)-5,6,7,8-tetrahydrofolate; it reads SLLP.

This sequence belongs to the Fmt family.

The catalysed reaction is L-methionyl-tRNA(fMet) + (6R)-10-formyltetrahydrofolate = N-formyl-L-methionyl-tRNA(fMet) + (6S)-5,6,7,8-tetrahydrofolate + H(+). In terms of biological role, attaches a formyl group to the free amino group of methionyl-tRNA(fMet). The formyl group appears to play a dual role in the initiator identity of N-formylmethionyl-tRNA by promoting its recognition by IF2 and preventing the misappropriation of this tRNA by the elongation apparatus. This is Methionyl-tRNA formyltransferase from Leifsonia xyli subsp. xyli (strain CTCB07).